Consider the following 190-residue polypeptide: Potassium-transporting ATPase KdpC subunit (190 aa).

The chain crosses the membrane as a helical span at residues 10–30 (TFLFLLLITGGVYPLLTTALG).

This sequence belongs to the KdpC family. In terms of assembly, the system is composed of three essential subunits: KdpA, KdpB and KdpC.

It is found in the cell inner membrane. In terms of biological role, part of the high-affinity ATP-driven potassium transport (or Kdp) system, which catalyzes the hydrolysis of ATP coupled with the electrogenic transport of potassium into the cytoplasm. This subunit acts as a catalytic chaperone that increases the ATP-binding affinity of the ATP-hydrolyzing subunit KdpB by the formation of a transient KdpB/KdpC/ATP ternary complex. The sequence is that of Potassium-transporting ATPase KdpC subunit from Escherichia coli O45:K1 (strain S88 / ExPEC).